The primary structure comprises 293 residues: MGSGKDRTLAGWTLPETKTDATAQFDRFVTENRFTIAVVFPLVGAVTLLASAEGLLPDPLAFNPYFVLFGTFVMRLPLVAGIFPLVDRRAGLALVALTLYSYGIELVGVRTGWPYGEFTYGVDLGPMLLGDVPFGLPVFFFPLVLNAYLLVLLLLGNRAASTTVRLLSTLATVMLVDLVLDPGAVAIGFWIYEMPQFYGVPWQNYAGWLLSGSVAVLLFDFGFDRAGLRRRLRDCPFMLDDLVSFVLLWGGINLFYTNWVPFGLAALLGAGLLWTDRFDFDLSETRLGRAVWR.

7 consecutive transmembrane segments (helical) span residues 36 to 56 (IAVVFPLVGAVTLLASAEGLL), 66 to 86 (FVLFGTFVMRLPLVAGIFPLV), 89 to 109 (RAGLALVALTLYSYGIELVGV), 134 to 154 (FGLPVFFFPLVLNAYLLVLLL), 171 to 191 (ATVMLVDLVLDPGAVAIGFWI), 199 to 219 (GVPWQNYAGWLLSGSVAVLLF), and 254 to 274 (LFYTNWVPFGLAALLGAGLLW).

It belongs to the BABR hydratase family.

It is found in the membrane. It carries out the reaction bacterioruberin = bisanhydrobacterioruberin + 2 H2O. The protein operates within carotenoid biosynthesis. Functionally, involved in the biosynthesis of the acyclic C50 carotenoid bacterioruberin (BR). Catalyzes the reaction that introduces hydroxyl groups to C3'' and C3''' of bisanhydrobacterioruberin (BABR) to generate BR. This chain is Bisanhydrobacterioruberin hydratase, found in Haloarcula japonica (strain ATCC 49778 / DSM 6131 / JCM 7785 / NBRC 101032 / NCIMB 13157 / TR-1).